A 426-amino-acid chain; its full sequence is DNA polymerase processivity factor component A20 (426 aa).

This sequence belongs to the poxviruses A20 family. In terms of assembly, interacts with the DNA polymerase catalytic subunit E9. Interacts with UDG. Component of the Uracil-DNA glycosylase(UDG)-A20-polymerase complex; A20 and UDG form a heterodimeric processivity factor that associates with E9 to form the processive polymerase holoenzyme. Interacts with D5.

Plays an essential role in viral DNA replication by acting as the polymerase processivity factor together with protein D4. May serve as a bridge which links the DNA polymerase E9 and the uracil DNA glycosylase. The protein is DNA polymerase processivity factor component A20 of Vaccinia virus (strain Ankara) (VACV).